A 530-amino-acid polypeptide reads, in one-letter code: GMP synthase [glutamine-hydrolyzing] (530 aa).

Residues 18-207 (TILVLDFGSQ…AVDICQAKTN (190 aa)) enclose the Glutamine amidotransferase type-1 domain. Residue Cys-94 is the Nucleophile of the active site. Catalysis depends on residues His-181 and Glu-183. In terms of domain architecture, GMPS ATP-PPase spans 208–405 (WSMENFIDTE…LGVPEDLVWR (198 aa)). 236–242 (SGGVDST) is a binding site for ATP. 4 residues coordinate XMP: Arg-309, Asp-467, Lys-522, and Glu-528.

Homodimer. Mg(2+) is required as a cofactor.

It is found in the cytoplasm. It localises to the cytosol. It carries out the reaction XMP + L-glutamine + ATP + H2O = GMP + L-glutamate + AMP + diphosphate + 2 H(+). The protein operates within purine metabolism; GMP biosynthesis; GMP from XMP (L-Gln route): step 1/1. Catalyzes the conversion of xanthine monophosphate (XMP) to GMP in the presence of glutamine and ATP through an adenyl-XMP intermediate. This chain is GMP synthase [glutamine-hydrolyzing] (GUA1), found in Candida albicans (strain SC5314 / ATCC MYA-2876) (Yeast).